Here is a 1116-residue protein sequence, read N- to C-terminus: Electrogenic sodium bicarbonate cotransporter 4 (1116 aa).

The span at 1-14 (MKVDEEKAGVKKLD) shows a compositional bias: basic and acidic residues. Disordered stretches follow at residues 1–92 (MKVD…TRSP), 222–257 (PIHR…STED), and 431–467 (PGQM…SGDE). Over 1–515 (MKVDEEKAGV…YDGFHLQSIS (515 aa)) the chain is Cytoplasmic. Low complexity predominate over residues 233-247 (SVSTTNRSSARSSSA). Residues 437 to 464 (SVGGGGASAGGGGSGGGAGGSGAGGVGS) are compositionally biased toward gly residues. A helical membrane pass occupies residues 516-536 (AVLFIYLGCITNAITFGGLLG). At 537–558 (DATDNYQGVMESFLGTAMAGSL) the chain is on the extracellular side. The helical transmembrane segment at 559–579 (FCLFSGQPLIILSSTGPILIF) threads the bilayer. Residues 580 to 600 (EKLLFDFSKANGLDYMEFRLW) are Cytoplasmic-facing. The helical transmembrane segment at 601 to 621 (IGLHSAIQCLILVATDASFII) threads the bilayer. Topologically, residues 622 to 631 (KYITRFTEEG) are extracellular. Residues 632 to 652 (FSTLISFIFIYDAIKKMIGAF) form a helical membrane-spanning segment. Over 653–730 (KYYPINTDFK…GGRLLGSSCQ (78 aa)) the chain is Cytoplasmic. The chain crosses the membrane as a helical span at residues 731 to 751 (FVPDLALMSFILFFGTYSMTL). Over 752 to 768 (TLKKFKFSRYFPTKVRT) the chain is Extracellular. A helical transmembrane segment spans residues 769 to 789 (LVADFSIVFSILLFCGIDACF). Residues 790-819 (GLQTPKLHVPSVIKPTRPDRGWFVAPFGKN) are Cytoplasmic-facing. The chain crosses the membrane as a helical span at residues 820-840 (PWWVYPASILPALLVTILIFM). The Extracellular segment spans residues 841 to 865 (DQQITAVIVNRKENKLRKAAGYHLD). A helical transmembrane segment spans residues 866 to 886 (LFWVGILMALCSFTGLPWYVA). The Cytoplasmic segment spans residues 887–922 (ATVISIAHIDSLKMETETSAPGEQPQFLGVREQRVT). Residues 923 to 943 (GVMVFILTGISVFLAPILKYI) form a helical membrane-spanning segment. The Extracellular segment spans residues 944–945 (PM). The helical transmembrane segment at 946-966 (PVLYGVFLYMGVASLNGIQFW) threads the bilayer. Residues 967–987 (ERCKLFLMPAKHQPDHAFLRH) are Cytoplasmic-facing. Helical transmembrane passes span 988–1008 (VPLR…ALLW) and 1009–1029 (ILKS…LIIV). At 1030–1116 (RRLLDLIFSQ…KRSSSWSYSL (87 aa)) the chain is on the cytoplasmic side.

It belongs to the anion exchanger (TC 2.A.31) family.

It is found in the apical cell membrane. The protein resides in the basolateral cell membrane. The enzyme catalyses 2 hydrogencarbonate(out) + Na(+)(out) = 2 hydrogencarbonate(in) + Na(+)(in). It catalyses the reaction 3 hydrogencarbonate(out) + Na(+)(out) = 3 hydrogencarbonate(in) + Na(+)(in). Its function is as follows. Mediates sodium- and bicarbonate-dependent electrogenic sodium bicarbonate cotransport, with a Na(+):HCO3(-) stoichiometry varying from 1:2 to 1:3. This Mus musculus (Mouse) protein is Electrogenic sodium bicarbonate cotransporter 4 (Slc4a5).